We begin with the raw amino-acid sequence, 371 residues long: Glycosyltransferase 8 domain-containing protein 1 (371 aa).

Residues 1 to 7 (MSFRKVN) lie on the Cytoplasmic side of the membrane. Residues 8–28 (IVILVLAVALFLLVLHHNFLG) traverse the membrane as a helical; Signal-anchor for type II membrane protein segment. Topologically, residues 29-371 (LSSLLRNEVS…RRHVEISNTK (343 aa)) are lumenal. 2 N-linked (GlcNAc...) asparagine glycosylation sites follow: N103 and N257.

Belongs to the glycosyltransferase 8 family.

Its subcellular location is the membrane. This chain is Glycosyltransferase 8 domain-containing protein 1 (GLT8D1), found in Bos taurus (Bovine).